Reading from the N-terminus, the 191-residue chain is Cell division protein SepF (191 aa).

Residues 150-191 are disordered; sequence TSSSPEEASPSSVSPKNTPQYSVENNTAPEPAWGNSKLSAFS. A compositionally biased stretch (low complexity) spans 151 to 164; that stretch reads SSSPEEASPSSVSP. Polar residues predominate over residues 165-177; that stretch reads KNTPQYSVENNTA.

It belongs to the SepF family. In terms of assembly, homodimer. Interacts with FtsZ.

Its subcellular location is the cytoplasm. Functionally, cell division protein that is part of the divisome complex and is recruited early to the Z-ring. Probably stimulates Z-ring formation, perhaps through the cross-linking of FtsZ protofilaments. Its function overlaps with FtsA. In Prochlorococcus marinus (strain MIT 9312), this protein is Cell division protein SepF.